The sequence spans 356 residues: Carbohydrate sulfotransferase 10 (356 aa).

Residues 1–6 are Cytoplasmic-facing; that stretch reads MHHQWL. A helical; Signal-anchor for type II membrane protein transmembrane segment spans residues 7-27; it reads LLAACFWVIFMFMVASKFITL. Topologically, residues 28–356 are lumenal; that stretch reads TFKDPDGYSA…GYQKPDFLLN (329 aa). N-linked (GlcNAc...) asparagine glycosylation is present at N99. 3'-phosphoadenylyl sulfate-binding positions include 127 to 133 and 189 to 197; these read PKVGNTQ and RDPFERLIS. N-linked (GlcNAc...) asparagine glycans are attached at residues N228 and N316.

Belongs to the sulfotransferase 2 family. As to expression, in myogenic progenitors, it is ubiquitously expressed.

It is found in the golgi apparatus membrane. It catalyses the reaction 3-O-{beta-D-GlcA-(1-&gt;[3)-alpha-D-Xyl-(1-&gt;3)-beta-D-GlcA-(1-&gt;](n)-4)-beta-D-Xyl-(1-&gt;4)-Rib-ol-P-Rib-ol-P-3-beta-D-GalNAc-(1-&gt;3)-beta-D-GlcNAc-(1-&gt;4)-O-6-P-alpha-D-Man}-L-Thr-[protein] + 3'-phosphoadenylyl sulfate = 3-O-{O-3-S-beta-D-GlcA-(1-&gt;[3)-alpha-D-Xyl-(1-&gt;3)-beta-D-GlcA-(1-&gt;](n)-4)-beta-D-Xyl-(1-&gt;4)-Rib-ol-P-Rib-ol-P-3-beta-D-GalNAc-(1-&gt;3)-beta-D-GlcNAc-(1-&gt;4)-O-6-P-alpha-D-Man}-L-Thr-[protein] + adenosine 3',5'-bisphosphate + H(+). The catalysed reaction is 17beta-estradiol 3-O-(beta-D-glucuronate) + 3'-phosphoadenylyl sulfate = 17beta-estradiol 3-O-(3-sulfo-beta-D-glucuronate) + adenosine 3',5'-bisphosphate + H(+). It carries out the reaction 17beta-estradiol 3-O-(beta-D-glucuronate) 17-sulfate + 3'-phosphoadenylyl sulfate = 17beta-estradiol 3-O-(3-sulfo-beta-D-glucuronate) 17-sulfate + adenosine 3',5'-bisphosphate + H(+). The enzyme catalyses 17beta-estradiol 17-O-(beta-D-glucuronate) + 3'-phosphoadenylyl sulfate = 17beta-estradiol 17-O-(3-sulfo-beta-D-glucuronate) + adenosine 3',5'-bisphosphate + H(+). It catalyses the reaction 16alpha,17beta-estriol 3-O-(beta-D-glucuronate) + 3'-phosphoadenylyl sulfate = 16alpha,17beta-estriol 3-O-(3-sulfo-beta-D-glucuronate) + adenosine 3',5'-bisphosphate + H(+). The catalysed reaction is 16alpha,17beta-estriol 16-O-(beta-D-glucuronate) + 3'-phosphoadenylyl sulfate = 16alpha,17beta-estriol 16-O-(3-sulfo-beta-D-glucuronate) + adenosine 3',5'-bisphosphate + H(+). It carries out the reaction 16alpha,17beta-estriol 17-O-(beta-D-glucuronate) + 3'-phosphoadenylyl sulfate = 16alpha,17beta-estriol 17-O-(3-sulfo-beta-D-glucuronate) + adenosine 3',5'-bisphosphate + H(+). The enzyme catalyses estrone 3-O-(beta-D-glucuronate) + 3'-phosphoadenylyl sulfate = estrone 3-O-(3-sulfo-beta-D-glucuronate) + adenosine 3',5'-bisphosphate + H(+). It catalyses the reaction 3alpha,20alpha-dihydroxy-5beta-pregnane 3-O-(beta-D-glucuronate) + 3'-phosphoadenylyl sulfate = 3alpha,20alpha-dihydroxy-5beta-pregnane 3-O-(3-sulfo-beta-D-glucuronate) + adenosine 3',5'-bisphosphate + H(+). The catalysed reaction is testosterone 17-O-(beta-D-glucuronate) + 3'-phosphoadenylyl sulfate = testosterone 17-O-(3-sulfo-beta-D-glucuronate) + adenosine 3',5'-bisphosphate + H(+). It carries out the reaction 3beta-androst-5-en-17-one 3-O-(beta-D-glucuronate) + 3'-phosphoadenylyl sulfate = 3beta-androst-5-en-17-one 3-O-(3-sulfo-beta-D-glucuronate) + adenosine 3',5'-bisphosphate + H(+). The enzyme catalyses 3alpha,17alpha-dihydroxy-5beta-androstane-11-one-17beta-carboxylate 3-O-(beta-D-glucuronate) + 3'-phosphoadenylyl sulfate = 3alpha,17alpha-dihydroxy-5beta-androstane-11-one-17beta-carboxylate 3-O-(3-sulfo-beta-D-glucuronate) + adenosine 3',5'-bisphosphate + H(+). It catalyses the reaction 3alpha-hydroxyetiocholan-17-one 3-O-(beta-D-glucuronate) + 3'-phosphoadenylyl sulfate = 3alpha-hydroxyetiocholan-17-one 3-O-(3-sulfo-beta-D-glucuronate) + adenosine 3',5'-bisphosphate + H(+). The protein operates within steroid metabolism. It functions in the pathway protein modification; carbohydrate sulfation. In terms of biological role, catalyzes the transfer of sulfate from 3'-phosphoadenylyl sulfate (PAPS) to position 3 of terminal glucuronic acid of both protein- and lipid-linked oligosaccharides. Participates in biosynthesis of HNK-1 carbohydrate structure 3-O-sulfo-beta-D-GlcA-(1-&gt;3)-beta-D-Gal-(1-&gt;4)-D-GlcNAc-R, a sulfated glucuronyl-lactosaminyl residue carried by many neural recognition molecules, which is involved in cell interactions during ontogenetic development and in synaptic plasticity in the adult. May be indirectly involved in synapse plasticity of the hippocampus, via its role in HNK-1 biosynthesis. Sulfates terminal glucuronyl residue of the laminin globular (LG)-domain binding epitope on DAG1/alpha-dystroglycan and prevents further polymerization by LARGE1 glycosyltransferase. Likely defines the chain length of LG epitope, conferring binding specificity to extracellular matrix components. Plays a role in down-regulating the steroid hormones. Sulfates glucuronidated estrogens and androgens with an impact in hormone cycle and fertility. Has a preference for glucuronyl moiety at the 3-hydroxyl group of a sterol ring rather than the 17-hydroxyl group, showing high catalytic efficiency for 17beta-estradiol 3-O-(beta-D-glucuronate) and dehydroepiandrosterone 3-O-(beta-D-glucuronate) hormones. The chain is Carbohydrate sulfotransferase 10 (Chst10) from Rattus norvegicus (Rat).